A 124-amino-acid chain; its full sequence is Small ribosomal subunit protein uS12c (124 aa).

The disordered stretch occupies residues Ser104 to Ser124. A compositionally biased stretch (basic residues) spans Arg113–Ser124.

The protein belongs to the universal ribosomal protein uS12 family. As to quaternary structure, part of the 30S ribosomal subunit.

The protein resides in the plastid. Its subcellular location is the chloroplast. Functionally, with S4 and S5 plays an important role in translational accuracy. Located at the interface of the 30S and 50S subunits. This Thalassiosira pseudonana (Marine diatom) protein is Small ribosomal subunit protein uS12c (rps12).